A 312-amino-acid chain; its full sequence is Malate dehydrogenase (312 aa).

NAD(+) is bound by residues 7–13 and Asp34; that span reads GAAGGIG. Substrate is bound by residues Arg81 and Arg87. NAD(+)-binding positions include Asn94 and 117–119; that span reads ITN. 2 residues coordinate substrate: Asn119 and Arg153. Catalysis depends on His177, which acts as the Proton acceptor. Met227 is an NAD(+) binding site.

It belongs to the LDH/MDH superfamily. MDH type 1 family. Homodimer.

The catalysed reaction is (S)-malate + NAD(+) = oxaloacetate + NADH + H(+). In terms of biological role, catalyzes the reversible oxidation of malate to oxaloacetate. This Citrobacter koseri (strain ATCC BAA-895 / CDC 4225-83 / SGSC4696) protein is Malate dehydrogenase.